The primary structure comprises 740 residues: Catalase-peroxidase (740 aa).

The tryptophyl-tyrosyl-methioninium (Trp-Tyr) (with M-255) cross-link spans 107–229 (WHAAGTYRIH…LAAVQMGLIY (123 aa)). The active-site Proton acceptor is the His108. The segment at residues 229-255 (YVNPEGPNGNPDPMAAAVDIRETFRRM) is a cross-link (tryptophyl-tyrosyl-methioninium (Tyr-Met) (with W-107)). His270 lines the heme b pocket.

It belongs to the peroxidase family. Peroxidase/catalase subfamily. As to quaternary structure, homodimer. Heme b is required as a cofactor. Formation of the three residue Trp-Tyr-Met cross-link is important for the catalase, but not the peroxidase activity of the enzyme.

It catalyses the reaction H2O2 + AH2 = A + 2 H2O. The catalysed reaction is 2 H2O2 = O2 + 2 H2O. Functionally, bifunctional enzyme with both catalase and broad-spectrum peroxidase activity. May play a role in the intracellular survival of mycobacteria. This chain is Catalase-peroxidase, found in Mycobacterium bovis (strain ATCC BAA-935 / AF2122/97).